The sequence spans 434 residues: SPARC-related modular calcium-binding protein 1 (434 aa).

The N-terminal stretch at 1 to 26 is a signal peptide; it reads MLPARCARLLTPHLLLVLVQLSPARG. The Kazal-like domain occupies 37-89; sequence SDRDPQCNLHCSRTQPKPICASDGRSYESMCEYQRAKCRDPTLGVVHRGRCKD. 6 disulfides stabilise this stretch: cysteine 43/cysteine 74, cysteine 47/cysteine 67, cysteine 56/cysteine 87, cysteine 95/cysteine 118, cysteine 129/cysteine 136, and cysteine 138/cysteine 158. The Thyroglobulin type-1 1 domain occupies 92-158; the sequence is QSKCRLERAQ…SSVQNKTPVC (67 aa). Over residues 149 to 172 the composition is skewed to polar residues; that stretch reads SSVQNKTPVCSGSVTDKPLSQGNS. The interval 149–191 is disordered; it reads SSVQNKTPVCSGSVTDKPLSQGNSGRKDDGSKPTPTMETQPVF. The N-linked (GlcNAc...) asparagine glycan is linked to asparagine 214. A Thyroglobulin type-1 2 domain is found at 224 to 292; that stretch reads VYSCDQERQS…TSTRYVMPSC (69 aa). 3 disulfides stabilise this stretch: cysteine 227–cysteine 251, cysteine 262–cysteine 269, and cysteine 271–cysteine 292. 2 EF-hand domains span residues 359 to 394 and 396 to 431; these read LEER…VKKK and KPKK…SKEG. Residues aspartate 372, asparagine 374, serine 376, aspartate 378, glutamate 383, aspartate 409, asparagine 411, aspartate 413, and glutamate 420 each contribute to the Ca(2+) site. Residue asparagine 374 is glycosylated (N-linked (GlcNAc...) asparagine).

Glycosylated. Widely expressed in many tissues with a strongest signal in ovary. No expression in spleen.

It localises to the secreted. Its subcellular location is the extracellular space. The protein localises to the extracellular matrix. The protein resides in the basement membrane. In terms of biological role, plays essential roles in both eye and limb development. Probable regulator of osteoblast differentiation. This chain is SPARC-related modular calcium-binding protein 1 (SMOC1), found in Homo sapiens (Human).